The primary structure comprises 356 residues: Histidinol-phosphate aminotransferase (356 aa).

An N6-(pyridoxal phosphate)lysine modification is found at lysine 214.

It belongs to the class-II pyridoxal-phosphate-dependent aminotransferase family. Histidinol-phosphate aminotransferase subfamily. In terms of assembly, homodimer. It depends on pyridoxal 5'-phosphate as a cofactor.

The catalysed reaction is L-histidinol phosphate + 2-oxoglutarate = 3-(imidazol-4-yl)-2-oxopropyl phosphate + L-glutamate. The protein operates within amino-acid biosynthesis; L-histidine biosynthesis; L-histidine from 5-phospho-alpha-D-ribose 1-diphosphate: step 7/9. The chain is Histidinol-phosphate aminotransferase from Shigella boydii serotype 4 (strain Sb227).